Here is a 395-residue protein sequence, read N- to C-terminus: RNA demethylase ALKBH5 (395 aa).

Disordered regions lie at residues 1–28 and 47–83; these read MAAA…AGSR and AAEP…EEEA. Position 2 is an N-acetylalanine (alanine 2). A Glycyl lysine isopeptide (Lys-Gly) (interchain with G-Cter in ubiquitin) cross-link involves residue lysine 58. The span at 60–83 shows a compositional bias: basic and acidic residues; that stretch reads KYQEDSDPERSDYEEHQLQKEEEA. 2 positions are modified to phosphoserine: serine 65 and serine 70. Residues 68–117 are a coiled coil; that stretch reads ERSDYEEHQLQKEEEARKVKSGIRQIRLFSQDECSKIEARIDEVVSRAEK. Tyrosine 72 carries the phosphotyrosine modification. Lysine 87 participates in a covalent cross-link: Glycyl lysine isopeptide (Lys-Gly) (interchain with G-Cter in SUMO1). Serine 88 is modified (phosphoserine). Lysine 133 carries the post-translational modification N6-acetyllysine. Residue tyrosine 140 is part of the active site. 2-oxoglutarate-binding residues include asparagine 194, tyrosine 196, and histidine 205. The cysteines at positions 231 and 268 are disulfide-linked. Lysine 236 is modified (N6-acetyllysine). Residues histidine 267 and arginine 278 each contribute to the 2-oxoglutarate site. Residues 294–395 are disordered; sequence ETKSLSSSTL…PTRKVKMRRH (102 aa). Residues 296-306 show a composition bias toward low complexity; the sequence is KSLSSSTLPPS. Lysine 322 is covalently cross-linked (Glycyl lysine isopeptide (Lys-Gly) (interchain with G-Cter in SUMO1)). Serine 326 is modified (phosphoserine). Lysine 329 is covalently cross-linked (Glycyl lysine isopeptide (Lys-Gly) (interchain with G-Cter in SUMO2)). Positions 329–350 are enriched in basic and acidic residues; sequence KADPDAAHRPRILEMDKEENRR. Position 360 is an omega-N-methylarginine (arginine 360). Serine 362, serine 372, serine 375, and serine 385 each carry phosphoserine.

This sequence belongs to the alkB family. As to quaternary structure, monomer. Interacts with RBM33; promoting desumoylation by SENP1 and recruitment to N(6)-methyladenosine-containing mRNAs. Interacts (when acetylated by KAT8) with PSPC1; interaction facilitates recognition of N(6)-methyladenosine (m6A) mRNA. Fe(2+) serves as cofactor. Post-translationally, phosphorylated at Ser-88 and Ser-326 in response to reactive oxygen species (ROS), promoting sumoylation and inactivation. In terms of processing, acetylated by KAT8 at Lys-236, promoting interaction with PSPC1, thereby facilitating recognition of N(6)-methyladenosine (m6A) mRNA by ALKBH5. Deacetylated at Lys-236 by HDAC7. Sumoylated at Lys-87 and Lys-322 by PIAS4 following phosphorylation at Ser-88 and Ser-326 in response to reactive oxygen species (ROS), inhibiting the RNA demethylase activity. Desumoylated by SENP1; relieving RNA demethylase inhibition, leading to N(6)-methyladenosine-containing mRNAs demethylation. Post-translationally, ubiquitinated at Lys-58 via 'Lys-48'-linked polyubiquitin chain, leading to its degradation by the proteasome. Deubiquitinated at Lys-58 by USP9X, promoting its stabilizazion. In terms of tissue distribution, widely expressed, with highest expression in testis. In testis, present in almost all testicular cell types except elongating and elongated spermatids (at protein level). Among spermatogenic cells, present at high level in spermatocytes; medium levels in spermatogonia and lower levels in round spermatids (at protein level).

It localises to the nucleus speckle. It carries out the reaction an N(6)-methyladenosine in mRNA + 2-oxoglutarate + O2 = an adenosine in mRNA + formaldehyde + succinate + CO2. With respect to regulation, RNA demethylase activity is inhibited following sumoylation. Inhibition is relieved following desumoylation. Inhibited by histone demethylase inhibitor IOX1. Functionally, dioxygenase that specifically demethylates N(6)-methyladenosine (m6A) RNA, the most prevalent internal modification of messenger RNA (mRNA) in higher eukaryotes. Demethylates RNA by oxidative demethylation, which requires molecular oxygen, alpha-ketoglutarate and iron. Demethylation of m6A mRNA affects mRNA processing, translation and export. Can also demethylate N(6)-methyladenosine in single-stranded DNA (in vitro). Required for the late meiotic and haploid phases of spermatogenesis by mediating m6A demethylation in spermatocytes and round spermatids: m6A demethylation of target transcripts is required for correct splicing and the production of longer 3'-UTR mRNAs in male germ cells. Involved in paraspeckle assembly, a nuclear membraneless organelle, by undergoing liquid-liquid phase separation. Paraspeckle assembly is coupled with m6A demethylation of RNAs, such as NEAT1 non-coding RNA. Also acts as a negative regulator of T-cell development: inhibits gamma-delta T-cell proliferation via demethylation of JAG1 and NOTCH2 transcripts. Inhibits regulatory T-cell (Treg) recruitment by mediating demethylation and destabilization of CCL28 mRNAs. The protein is RNA demethylase ALKBH5 of Mus musculus (Mouse).